The following is a 514-amino-acid chain: Putative transposase y4uI (514 aa).

In terms of domain architecture, HTH IS408-type spans 11 to 93; that stretch reads VREILKLRLD…PDWSAVAREL (83 aa). Residues 128-317 enclose the Integrase catalytic domain; sequence HGRLPLVMRQ…TRRALFDELD (190 aa).

Belongs to the transposase IS21/IS408/IS1162 family.

This Sinorhizobium fredii (strain NBRC 101917 / NGR234) protein is Putative transposase y4uI.